Reading from the N-terminus, the 223-residue chain is Ribosome maturation factor RimM (223 aa).

The PRC barrel domain maps to 142 to 223 (ADEFYWVDLI…RIVVDWEADY (82 aa)).

Belongs to the RimM family. In terms of assembly, binds ribosomal protein uS19.

It is found in the cytoplasm. Its function is as follows. An accessory protein needed during the final step in the assembly of 30S ribosomal subunit, possibly for assembly of the head region. Essential for efficient processing of 16S rRNA. May be needed both before and after RbfA during the maturation of 16S rRNA. It has affinity for free ribosomal 30S subunits but not for 70S ribosomes. This is Ribosome maturation factor RimM from Burkholderia multivorans (strain ATCC 17616 / 249).